We begin with the raw amino-acid sequence, 98 residues long: NADH-ubiquinone oxidoreductase chain 4L (98 aa).

3 consecutive transmembrane segments (helical) span residues 1–21, 28–48, and 59–79; these read MMPI…GTLI, STLL…AMLI, and APLI…ALLV.

It belongs to the complex I subunit 4L family. In terms of assembly, core subunit of respiratory chain NADH dehydrogenase (Complex I) which is composed of 45 different subunits.

Its subcellular location is the mitochondrion inner membrane. It carries out the reaction a ubiquinone + NADH + 5 H(+)(in) = a ubiquinol + NAD(+) + 4 H(+)(out). Core subunit of the mitochondrial membrane respiratory chain NADH dehydrogenase (Complex I) which catalyzes electron transfer from NADH through the respiratory chain, using ubiquinone as an electron acceptor. Part of the enzyme membrane arm which is embedded in the lipid bilayer and involved in proton translocation. This Petaurus breviceps (Australian sugar glider) protein is NADH-ubiquinone oxidoreductase chain 4L (MT-ND4L).